Reading from the N-terminus, the 80-residue chain is Small ribosomal subunit protein bS21 (80 aa).

It belongs to the bacterial ribosomal protein bS21 family.

In Rhodospirillum rubrum (strain ATCC 11170 / ATH 1.1.1 / DSM 467 / LMG 4362 / NCIMB 8255 / S1), this protein is Small ribosomal subunit protein bS21.